A 551-amino-acid polypeptide reads, in one-letter code: MRDYDEAIAFLGEWGPFQRLIFFLLSASIIPNGFNGMSVVFLAGTPEHRCRVPDAANLSSAWRNNSVPLRLRDGREVLHSCRRYRLATIANFSALGLEPGRDVDLGQLEQESCLDGWEFSQDVYWSTVVTEWNLVCEDNWKVPLTTSLFFVGVLLGSFVSGQLSDRFGRKNVLFATMAVQTGFSFLQIFSISWEMFTVLFLIVGMGQISNYVVAFILGTEILGKSVRIIFSTLGVCTFFAVGYMLLPLFAYFIRDWRMLLLALTVPGVLCVPLWWFIPESPRWLISQRRFREAEDIIQKAAKMNNIAVPAVIFDSVEELNPLKQQKAFILDLFRTWNIAIMTIMSLLLWMLTSVGYFALSLDTPNLHGDAYLNCFLSALIEIPAYITAWLLLRTLPRRYIIAAVLFWGGGVLLFIQLVPVDYYFLSIGLVMLGKFGITSAFSMLYVFTAELYPTMVRNMAVGVTSMASRVGSIIAPYFVYLGAYNRMLPYIVMGSLTVLIGILTLFFPESLGMTLPETLEQMQKVKWFRSGKKTRDSMETEENPKVLITAF.

The Cytoplasmic portion of the chain corresponds to 1 to 20; the sequence is MRDYDEAIAFLGEWGPFQRL. Residues 21-41 traverse the membrane as a helical segment; sequence IFFLLSASIIPNGFNGMSVVF. At 42–141 the chain is on the extracellular side; that stretch reads LAGTPEHRCR…WNLVCEDNWK (100 aa). 3 N-linked (GlcNAc...) asparagine glycosylation sites follow: N57, N64, and N91. The chain crosses the membrane as a helical span at residues 142 to 162; that stretch reads VPLTTSLFFVGVLLGSFVSGQ. Topologically, residues 163–171 are cytoplasmic; that stretch reads LSDRFGRKN. A helical transmembrane segment spans residues 172 to 192; sequence VLFATMAVQTGFSFLQIFSIS. Topologically, residues 193–197 are extracellular; that stretch reads WEMFT. Residues 198–218 form a helical membrane-spanning segment; it reads VLFLIVGMGQISNYVVAFILG. 218 to 225 lines the ATP pocket; it reads GTEILGKS. Residues 219–232 are Cytoplasmic-facing; that stretch reads TEILGKSVRIIFST. The helical transmembrane segment at 233–253 threads the bilayer; that stretch reads LGVCTFFAVGYMLLPLFAYFI. Residues 254–257 are Extracellular-facing; that stretch reads RDWR. Residues 258–278 traverse the membrane as a helical segment; it reads MLLLALTVPGVLCVPLWWFIP. At 279–337 the chain is on the cytoplasmic side; that stretch reads ESPRWLISQRRFREAEDIIQKAAKMNNIAVPAVIFDSVEELNPLKQQKAFILDLFRTWN. The chain crosses the membrane as a helical span at residues 338-358; that stretch reads IAIMTIMSLLLWMLTSVGYFA. Residues 359–371 lie on the Extracellular side of the membrane; that stretch reads LSLDTPNLHGDAY. A helical membrane pass occupies residues 372–392; that stretch reads LNCFLSALIEIPAYITAWLLL. Over 393–399 the chain is Cytoplasmic; sequence RTLPRRY. A helical membrane pass occupies residues 400 to 420; sequence IIAAVLFWGGGVLLFIQLVPV. The Extracellular portion of the chain corresponds to 421-426; it reads DYYFLS. The helical transmembrane segment at 427–447 threads the bilayer; the sequence is IGLVMLGKFGITSAFSMLYVF. The Cytoplasmic portion of the chain corresponds to 448 to 460; that stretch reads TAELYPTMVRNMA. Residues 461-481 form a helical membrane-spanning segment; that stretch reads VGVTSMASRVGSIIAPYFVYL. At 482-486 the chain is on the extracellular side; sequence GAYNR. Residues 487–507 form a helical membrane-spanning segment; sequence MLPYIVMGSLTVLIGILTLFF. Over 508–551 the chain is Cytoplasmic; it reads PESLGMTLPETLEQMQKVKWFRSGKKTRDSMETEENPKVLITAF.

Belongs to the major facilitator (TC 2.A.1) superfamily. Organic cation transporter (TC 2.A.1.19) family. Interacts with PDZK1.

It is found in the apical cell membrane. The protein localises to the basal cell membrane. Its subcellular location is the mitochondrion membrane. It carries out the reaction ergothioneine(out) + Na(+)(out) = ergothioneine(in) + Na(+)(in). The enzyme catalyses acetylcholine(in) = acetylcholine(out). The catalysed reaction is (R)-carnitine(out) + Na(+)(out) = (R)-carnitine(in) + Na(+)(in). It catalyses the reaction glycine betaine(out) + Na(+)(out) = glycine betaine(in) + Na(+)(in). Its activity is regulated as follows. Allosterically activated by intracellular ATP. Functionally, transporter that mediates the transport of endogenous and microbial zwitterions and organic cations. Functions as a Na(+)-dependent and pH-dependent high affinity microbial symporter of potent food-derived antioxidant ergothioeine. Transports one sodium ion with one ergothioeine molecule. Involved in the absorption of ergothioneine from the luminal/apical side of the small intestine and renal tubular cells, and into non-parenchymal liver cells, thereby contributing to maintain steady-state ergothioneine level in the body. Also mediates the bidirectional transport of acetycholine, although the exact transport mechanism has not been fully identified yet. Most likely exports anti-inflammatory acetylcholine in non-neuronal tissues, thereby contributing to the non-neuronal cholinergic system. Displays a general physiological role linked to better survival by controlling inflammation and oxidative stress, which may be related to ergothioneine and acetycholine transports. May also function as a low-affinity Na(+)-dependent transporter of L-carnitine through the mitochondrial membrane, thereby maintaining intracellular carnitine homeostasis. May contribute to regulate the transport of cationic compounds in testis across the blood-testis-barrier. This chain is Solute carrier family 22 member 4 (SLC22A4), found in Papio anubis (Olive baboon).